Reading from the N-terminus, the 481-residue chain is Protein JASON (481 aa).

The interval 226–250 (ECDLDQSNSSNSSENGSSRKPEMGG) is disordered. Over residues 232 to 241 (SNSSNSSENG) the composition is skewed to low complexity.

Its function is as follows. Required for normal spindle orientation at male meiosis II and normal formation of tetrad of microspores. Acts as a positive regulator of PS1 in male sporogenesis. Not involved in female meiosis. In Arabidopsis thaliana (Mouse-ear cress), this protein is Protein JASON.